The primary structure comprises 237 residues: Thrombin-like enzyme agkihpin-1 (237 aa).

Residue Met1 is a propeptide. The region spanning 2-228 (ILGDDECNIN…HLDWIENIIA (227 aa)) is the Peptidase S1 domain. Cys27 and Cys43 are joined by a disulfide. The active-site Charge relay system is the His42. Asn80 carries an N-linked (GlcNAc...) asparagine glycan. Asp87 acts as the Charge relay system in catalysis. Intrachain disulfides connect Cys119–Cys189, Cys151–Cys168, and Cys179–Cys204. Ser183 serves as the catalytic Charge relay system.

The protein belongs to the peptidase S1 family. Snake venom subfamily. Expressed by the venom gland.

Its subcellular location is the secreted. Its activity is regulated as follows. The hydrolysis of TAMe (tosyl-arginine methyl ester) substrate is activated by Ca(2+), Fe(3+), Mg(2+) and Zn(2+), and inhibited by EDTA, PMSF and DTT. In terms of biological role, thrombin-like enzyme that shows fibrinogenolytic activity against bovine fibrinogen alpha and beta chains, but not gamma chain. Hydrolyzes fibrin. Enhances ADP-induced human platelet aggregation. Has arginine esterase activity for TAMe (tosyl-arginine methyl ester) substrate. Reduces thrombin-induced thrombosis. Does not have hemorrhagic activity. Reduces the motility of human liver cancer HepG2 cells in a wound-healing assay. In Gloydius halys (Chinese water mocassin), this protein is Thrombin-like enzyme agkihpin-1.